Consider the following 179-residue polypeptide: Large ribosomal subunit protein uL5 (179 aa).

This sequence belongs to the universal ribosomal protein uL5 family. As to quaternary structure, part of the 50S ribosomal subunit; part of the 5S rRNA/L5/L18/L25 subcomplex. Contacts the 5S rRNA and the P site tRNA. Forms a bridge to the 30S subunit in the 70S ribosome.

Its function is as follows. This is one of the proteins that bind and probably mediate the attachment of the 5S RNA into the large ribosomal subunit, where it forms part of the central protuberance. In the 70S ribosome it contacts protein S13 of the 30S subunit (bridge B1b), connecting the 2 subunits; this bridge is implicated in subunit movement. Contacts the P site tRNA; the 5S rRNA and some of its associated proteins might help stabilize positioning of ribosome-bound tRNAs. In Lachnoclostridium phytofermentans (strain ATCC 700394 / DSM 18823 / ISDg) (Clostridium phytofermentans), this protein is Large ribosomal subunit protein uL5.